The primary structure comprises 344 residues: tRNA (guanine(26)-N(2))-dimethyltransferase (344 aa).

The region spanning 1-334 (MIVREGSAEI…ASCDLVESLM (334 aa)) is the Trm1 methyltransferase domain. Positions 35, 60, and 76 each coordinate S-adenosyl-L-methionine.

Belongs to the class I-like SAM-binding methyltransferase superfamily. Trm1 family.

It carries out the reaction guanosine(26) in tRNA + 2 S-adenosyl-L-methionine = N(2)-dimethylguanosine(26) in tRNA + 2 S-adenosyl-L-homocysteine + 2 H(+). Functionally, dimethylates a single guanine residue at position 26 of a number of tRNAs using S-adenosyl-L-methionine as donor of the methyl groups. In Thermoplasma acidophilum (strain ATCC 25905 / DSM 1728 / JCM 9062 / NBRC 15155 / AMRC-C165), this protein is tRNA (guanine(26)-N(2))-dimethyltransferase.